A 150-amino-acid polypeptide reads, in one-letter code: 3-hydroxyacyl-[acyl-carrier-protein] dehydratase FabZ (150 aa).

The active site involves histidine 51.

The protein belongs to the thioester dehydratase family. FabZ subfamily.

The protein localises to the cytoplasm. It carries out the reaction a (3R)-hydroxyacyl-[ACP] = a (2E)-enoyl-[ACP] + H2O. Its function is as follows. Involved in unsaturated fatty acids biosynthesis. Catalyzes the dehydration of short chain beta-hydroxyacyl-ACPs and long chain saturated and unsaturated beta-hydroxyacyl-ACPs. The chain is 3-hydroxyacyl-[acyl-carrier-protein] dehydratase FabZ from Geobacter sulfurreducens (strain ATCC 51573 / DSM 12127 / PCA).